The chain runs to 398 residues: CCA-adding enzyme (398 aa).

Residues G32 and R35 each contribute to the ATP site. Residues G32 and R35 each contribute to the CTP site. Positions 45 and 47 each coordinate Mg(2+). ATP-binding residues include R116, D159, R162, R165, and R168. R116, D159, R162, R165, and R168 together coordinate CTP.

It belongs to the tRNA nucleotidyltransferase/poly(A) polymerase family. Bacterial CCA-adding enzyme type 3 subfamily. As to quaternary structure, homodimer. It depends on Mg(2+) as a cofactor.

The catalysed reaction is a tRNA precursor + 2 CTP + ATP = a tRNA with a 3' CCA end + 3 diphosphate. The enzyme catalyses a tRNA with a 3' CCA end + 2 CTP + ATP = a tRNA with a 3' CCACCA end + 3 diphosphate. Catalyzes the addition and repair of the essential 3'-terminal CCA sequence in tRNAs without using a nucleic acid template. Adds these three nucleotides in the order of C, C, and A to the tRNA nucleotide-73, using CTP and ATP as substrates and producing inorganic pyrophosphate. tRNA 3'-terminal CCA addition is required both for tRNA processing and repair. Also involved in tRNA surveillance by mediating tandem CCA addition to generate a CCACCA at the 3' terminus of unstable tRNAs. While stable tRNAs receive only 3'-terminal CCA, unstable tRNAs are marked with CCACCA and rapidly degraded. This is CCA-adding enzyme from Lacticaseibacillus paracasei (strain ATCC 334 / BCRC 17002 / CCUG 31169 / CIP 107868 / KCTC 3260 / NRRL B-441) (Lactobacillus paracasei).